The sequence spans 160 residues: MGVTKKPDLSDPVLRAKLAKGMGHNYYGEPAWPNDLLYIFPVCIFGTIACTVGLSVLEPVIVGEPANPFATPLEILPEWYFFPVFQILRTVPNKLLGVLLMAGVPVGLLTVPFIENVNKFQNPFRRPVATTVFLLGTVVAIWLGIGAALPIDTSLTLGLF.

A run of 3 helical transmembrane segments spans residues 36 to 56, 95 to 115, and 131 to 151; these read LLYI…GLSV, LLGV…PFIE, and TVFL…ALPI.

Belongs to the cytochrome b family. PetD subfamily. In terms of assembly, the 4 large subunits of the cytochrome b6-f complex are cytochrome b6, subunit IV (17 kDa polypeptide, petD), cytochrome f and the Rieske protein, while the 4 small subunits are petG, petL, petM and petN. The complex functions as a dimer.

Its subcellular location is the plastid. It localises to the chloroplast thylakoid membrane. In terms of biological role, component of the cytochrome b6-f complex, which mediates electron transfer between photosystem II (PSII) and photosystem I (PSI), cyclic electron flow around PSI, and state transitions. This chain is Cytochrome b6-f complex subunit 4, found in Chaetosphaeridium globosum (Charophycean green alga).